The following is a 138-amino-acid chain: Envelope glycoprotein N (138 aa).

Residues methionine 1–glycine 21 form the signal peptide. Residues asparagine 22–serine 101 lie on the Virion surface side of the membrane. Residues phenylalanine 102 to leucine 122 form a helical membrane-spanning segment. The Intravirion portion of the chain corresponds to arginine 123–tyrosine 138.

The protein belongs to the herpesviridae glycoprotein N family. In terms of assembly, interacts (via N-terminus) with gM (via N-terminus). The gM-gN heterodimer forms the gCII complex. In terms of processing, O-glycosylated.

Its subcellular location is the virion membrane. The protein localises to the host membrane. It is found in the host Golgi apparatus. The protein resides in the host trans-Golgi network. Functionally, envelope glycoprotein necessary for proper maturation of gM and modulation of its membrane fusion activity. Also plays a critical role in virion morphogenesis. The protein is Envelope glycoprotein N of Human cytomegalovirus (strain AD169) (HHV-5).